The chain runs to 262 residues: UPF0758 protein R01728 (262 aa).

The segment at 23–44 (PEKRTRNSPATAPAPATDTHYH) is disordered. The span at 31 to 40 (PATAPAPATD) shows a compositional bias: low complexity. The MPN domain maps to 140-262 (VLSSWSAVID…HVSLKGLRLF (123 aa)). Residues His211, His213, and Asp224 each contribute to the Zn(2+) site. The JAMM motif motif lies at 211–224 (HNHPSGDPTPSRAD).

It belongs to the UPF0758 family.

The chain is UPF0758 protein R01728 from Rhizobium meliloti (strain 1021) (Ensifer meliloti).